Reading from the N-terminus, the 361-residue chain is Peptide chain release factor 1 (361 aa).

Residue Q236 is modified to N5-methylglutamine. Positions 285–309 are enriched in basic and acidic residues; that stretch reads TAKDSARAADRKAQVGSGDRSERIR. Residues 285–311 are disordered; sequence TAKDSARAADRKAQVGSGDRSERIRTY.

The protein belongs to the prokaryotic/mitochondrial release factor family. In terms of processing, methylated by PrmC. Methylation increases the termination efficiency of RF1.

Its subcellular location is the cytoplasm. In terms of biological role, peptide chain release factor 1 directs the termination of translation in response to the peptide chain termination codons UAG and UAA. The protein is Peptide chain release factor 1 of Methylorubrum extorquens (strain CM4 / NCIMB 13688) (Methylobacterium extorquens).